Here is an 853-residue protein sequence, read N- to C-terminus: Auxin response factor 23 (853 aa).

The tract at residues lysine 121–histidine 141 is disordered. The segment at residues phenylalanine 149–methionine 251 is a DNA-binding region (TF-B3). Disordered stretches follow at residues glutamate 422 to proline 471 and proline 647 to serine 723. Over residues proline 425–lysine 455 the composition is skewed to polar residues. Over residues glutamate 672–aspartate 686 the composition is skewed to basic and acidic residues. A compositionally biased stretch (polar residues) spans proline 706–serine 723. In terms of domain architecture, PB1 spans arginine 725–glutamate 809. A disordered region spans residues proline 815–cysteine 853. A compositionally biased stretch (polar residues) spans leucine 843 to cysteine 853.

This sequence belongs to the ARF family. In terms of assembly, homodimers and heterodimers.

It is found in the nucleus. Functionally, auxin response factors (ARFs) are transcriptional factors that bind specifically to the DNA sequence 5'-TGTCTC-3' found in the auxin-responsive promoter elements (AuxREs). The chain is Auxin response factor 23 (ARF23) from Oryza sativa subsp. indica (Rice).